The sequence spans 490 residues: tRNA modification GTPase MnmE (490 aa).

Residues R23, E80, and K133 each coordinate (6S)-5-formyl-5,6,7,8-tetrahydrofolate. The TrmE-type G domain occupies 229–412 (GIEVVIAGQP…LRRILLEVAG (184 aa)). N239 serves as a coordination point for K(+). GTP contacts are provided by residues 239–244 (NAGKSS), 258–264 (TPVAGTT), and 283–286 (DTAG). Residue S243 coordinates Mg(2+). K(+) contacts are provided by T258, V260, and T263. T264 contributes to the Mg(2+) binding site. Over residues 366-382 (PTAPTESAAVPPASARP) the composition is skewed to low complexity. The interval 366-388 (PTAPTESAAVPPASARPAPAPRP) is disordered. GTP is bound at residue 393-395 (SAR). K490 serves as a coordination point for (6S)-5-formyl-5,6,7,8-tetrahydrofolate.

This sequence belongs to the TRAFAC class TrmE-Era-EngA-EngB-Septin-like GTPase superfamily. TrmE GTPase family. In terms of assembly, homodimer. Heterotetramer of two MnmE and two MnmG subunits. The cofactor is K(+).

Its subcellular location is the cytoplasm. Exhibits a very high intrinsic GTPase hydrolysis rate. Involved in the addition of a carboxymethylaminomethyl (cmnm) group at the wobble position (U34) of certain tRNAs, forming tRNA-cmnm(5)s(2)U34. In Verminephrobacter eiseniae (strain EF01-2), this protein is tRNA modification GTPase MnmE.